The sequence spans 248 residues: 3-deoxy-manno-octulosonate cytidylyltransferase (248 aa).

Belongs to the KdsB family.

It localises to the cytoplasm. It catalyses the reaction 3-deoxy-alpha-D-manno-oct-2-ulosonate + CTP = CMP-3-deoxy-beta-D-manno-octulosonate + diphosphate. It participates in nucleotide-sugar biosynthesis; CMP-3-deoxy-D-manno-octulosonate biosynthesis; CMP-3-deoxy-D-manno-octulosonate from 3-deoxy-D-manno-octulosonate and CTP: step 1/1. It functions in the pathway bacterial outer membrane biogenesis; lipopolysaccharide biosynthesis. In terms of biological role, activates KDO (a required 8-carbon sugar) for incorporation into bacterial lipopolysaccharide in Gram-negative bacteria. This Klebsiella pneumoniae (strain 342) protein is 3-deoxy-manno-octulosonate cytidylyltransferase.